A 184-amino-acid chain; its full sequence is CASP-like protein 1U1 (184 aa).

The Cytoplasmic segment spans residues 1 to 30; sequence MSSTGTTLSASEGDKGFRNGAAPAKSKSHS. Residues 31-51 form a helical membrane-spanning segment; sequence TIALLRLLAFAATLSAFVTMI. Topologically, residues 52-76 are extracellular; it reads TNKQKITIGPFTRWSKWHYSDAFMW. The helical transmembrane segment at 77–97 threads the bilayer; sequence FVVANCIAFIYLLFAAILGLI. Residues 98–111 lie on the Cytoplasmic side of the membrane; that stretch reads SHSPMLVKHLVILD. Residues 112 to 132 form a helical membrane-spanning segment; the sequence is LIVSYMLFSAASAATAVAYIG. Topologically, residues 133-154 are extracellular; it reads KNGISQPGWTAICGVFERYCHH. The chain crosses the membrane as a helical span at residues 155–175; that stretch reads VAGALVACFLGWLFLTIAVFL. The Cytoplasmic portion of the chain corresponds to 176–184; that stretch reads GMRRSPAAV.

It belongs to the Casparian strip membrane proteins (CASP) family. Homodimer and heterodimers.

The protein localises to the cell membrane. This is CASP-like protein 1U1 from Marchantia polymorpha (Common liverwort).